A 120-amino-acid polypeptide reads, in one-letter code: Large ribosomal subunit protein uL22 (120 aa).

Belongs to the universal ribosomal protein uL22 family. Part of the 50S ribosomal subunit.

Functionally, this protein binds specifically to 23S rRNA; its binding is stimulated by other ribosomal proteins, e.g. L4, L17, and L20. It is important during the early stages of 50S assembly. It makes multiple contacts with different domains of the 23S rRNA in the assembled 50S subunit and ribosome. In terms of biological role, the globular domain of the protein is located near the polypeptide exit tunnel on the outside of the subunit, while an extended beta-hairpin is found that lines the wall of the exit tunnel in the center of the 70S ribosome. The protein is Large ribosomal subunit protein uL22 of Corynebacterium kroppenstedtii (strain DSM 44385 / JCM 11950 / CIP 105744 / CCUG 35717).